Reading from the N-terminus, the 82-residue chain is RNA-binding protein Hfq (82 aa).

Residues 11–72 form the Sm domain; sequence DTFLNAVRKS…ISTIAPSAPV (62 aa).

It belongs to the Hfq family. Homohexamer.

In terms of biological role, RNA chaperone that binds small regulatory RNA (sRNAs) and mRNAs to facilitate mRNA translational regulation in response to envelope stress, environmental stress and changes in metabolite concentrations. Also binds with high specificity to tRNAs. This is RNA-binding protein Hfq from Hyphomonas neptunium (strain ATCC 15444).